Reading from the N-terminus, the 451-residue chain is Potassium/sodium uptake protein NtpJ (451 aa).

Helical transmembrane passes span 18 to 38 (IAAG…LPFF), 46 to 66 (HFID…LTTL), 78 to 98 (FLIM…PILF), 133 to 153 (ILKF…VVFI), 162 to 182 (IWFS…DLLG), 192 to 212 (VYLI…FIVW), 230 to 250 (VALS…LITE), 293 to 313 (LILT…AGGL), 350 to 370 (ALTL…VLSV), 380 to 400 (IEYI…TMGL), and 410 to 430 (LVII…VFSL).

Belongs to the TrkH potassium transport family.

The protein localises to the cell membrane. Its function is as follows. Mediates electrogenic transport of potassium as well as sodium. Acts probably as a potassium-sodium cotransporter. Major sodium reentry pathway at high pH values. This chain is Potassium/sodium uptake protein NtpJ (ntpJ), found in Enterococcus hirae (strain ATCC 9790 / DSM 20160 / JCM 8729 / LMG 6399 / NBRC 3181 / NCIMB 6459 / NCDO 1258 / NCTC 12367 / WDCM 00089 / R).